The chain runs to 293 residues: Deubiquitinase OTUD6B (293 aa).

Residue Met1 is modified to N-acetylmethionine. In terms of domain architecture, OTU spans 147 to 284 (LEIKQIPSDG…GEHYNSVTRL (138 aa)). The tract at residues 152–158 (IPSDGHC) is cys-loop. Residue Asp155 is part of the active site. Catalysis depends on Cys158, which acts as the Nucleophile. Positions 219 to 229 (IVNTAAWGGQL) are variable-loop. The interval 267–277 (YMRHAYGLGEH) is his-loop. His277 is a catalytic residue.

In terms of assembly, interacts with the eukaryotic translation initiation factor 4F complex.

The catalysed reaction is Thiol-dependent hydrolysis of ester, thioester, amide, peptide and isopeptide bonds formed by the C-terminal Gly of ubiquitin (a 76-residue protein attached to proteins as an intracellular targeting signal).. Deubiquitinating enzyme that may play a role in the ubiquitin-dependent regulation of protein synthesis, downstream of mTORC1. May associate with the protein synthesis initiation complex and modify its ubiquitination to repress translation. May also repress DNA synthesis and modify different cellular targets thereby regulating cell growth and proliferation. May also play a role in proteasome assembly and function. Its function is as follows. Stimulates protein synthesis. Influences the expression of CCND1/cyclin D1 by promoting its translation and regulates MYC/c-Myc protein stability. This is Deubiquitinase OTUD6B from Homo sapiens (Human).